The sequence spans 485 residues: Sulfate adenylyltransferase subunit 1 (485 aa).

In terms of domain architecture, tr-type G spans Lys17–His232. The tract at residues Gly26–Ser33 is G1. Residue Gly26–Ser33 coordinates GTP. Residues Gly84–Asp88 form a G2 region. Residues Asp105 to Gly108 are G3. GTP contacts are provided by residues Asp105–His109 and Asn160–Asp163. A G4 region spans residues Asn160 to Asp163. The interval Ser197 to Leu199 is G5.

This sequence belongs to the TRAFAC class translation factor GTPase superfamily. Classic translation factor GTPase family. CysN/NodQ subfamily. In terms of assembly, heterodimer composed of CysD, the smaller subunit, and CysN.

The catalysed reaction is sulfate + ATP + H(+) = adenosine 5'-phosphosulfate + diphosphate. It functions in the pathway sulfur metabolism; hydrogen sulfide biosynthesis; sulfite from sulfate: step 1/3. In terms of biological role, with CysD forms the ATP sulfurylase (ATPS) that catalyzes the adenylation of sulfate producing adenosine 5'-phosphosulfate (APS) and diphosphate, the first enzymatic step in sulfur assimilation pathway. APS synthesis involves the formation of a high-energy phosphoric-sulfuric acid anhydride bond driven by GTP hydrolysis by CysN coupled to ATP hydrolysis by CysD. This Bacteroides thetaiotaomicron (strain ATCC 29148 / DSM 2079 / JCM 5827 / CCUG 10774 / NCTC 10582 / VPI-5482 / E50) protein is Sulfate adenylyltransferase subunit 1.